We begin with the raw amino-acid sequence, 232 residues long: 5'-methylthioadenosine/S-adenosylhomocysteine nucleosidase (232 aa).

Residue Glu-12 is the Proton acceptor of the active site. Residues Gly-78, Ile-152, and 173-174 (ME) contribute to the substrate site. Asp-197 acts as the Proton donor in catalysis.

Belongs to the PNP/UDP phosphorylase family. MtnN subfamily. In terms of assembly, homodimer.

The catalysed reaction is S-adenosyl-L-homocysteine + H2O = S-(5-deoxy-D-ribos-5-yl)-L-homocysteine + adenine. It catalyses the reaction S-methyl-5'-thioadenosine + H2O = 5-(methylsulfanyl)-D-ribose + adenine. It carries out the reaction 5'-deoxyadenosine + H2O = 5-deoxy-D-ribose + adenine. The protein operates within amino-acid biosynthesis; L-methionine biosynthesis via salvage pathway; S-methyl-5-thio-alpha-D-ribose 1-phosphate from S-methyl-5'-thioadenosine (hydrolase route): step 1/2. Its function is as follows. Catalyzes the irreversible cleavage of the glycosidic bond in both 5'-methylthioadenosine (MTA) and S-adenosylhomocysteine (SAH/AdoHcy) to adenine and the corresponding thioribose, 5'-methylthioribose and S-ribosylhomocysteine, respectively. Also cleaves 5'-deoxyadenosine, a toxic by-product of radical S-adenosylmethionine (SAM) enzymes, into 5-deoxyribose and adenine. Thus, is required for in vivo function of the radical SAM enzymes biotin synthase and lipoic acid synthase, that are inhibited by 5'-deoxyadenosine accumulation. The chain is 5'-methylthioadenosine/S-adenosylhomocysteine nucleosidase from Salmonella enteritidis PT4 (strain P125109).